A 360-amino-acid polypeptide reads, in one-letter code: UPF0283 membrane protein Oant_2119 (360 aa).

The interval 1–30 is disordered; the sequence is MTEKTPRKPASFTVSQASNRPEAADEAPRR. Helical transmembrane passes span 77–97 and 108–128; these read ILFG…TEDL and LGWT…AIVV.

It belongs to the UPF0283 family.

The protein localises to the cell inner membrane. The protein is UPF0283 membrane protein Oant_2119 of Brucella anthropi (strain ATCC 49188 / DSM 6882 / CCUG 24695 / JCM 21032 / LMG 3331 / NBRC 15819 / NCTC 12168 / Alc 37) (Ochrobactrum anthropi).